We begin with the raw amino-acid sequence, 37 residues long: Dolichyl-diphosphooligosaccharide--protein glycosyltransferase subunit 4A (37 aa).

Topologically, residues 1-7 (MIDDQDL) are lumenal. Residues 8 to 28 (GFIANFLGIFIFALVIAYHYV) traverse the membrane as a helical segment. Over 29–37 (TADPKYEAT) the chain is Cytoplasmic.

Belongs to the OST4 family. Component of the oligosaccharyltransferase (OST) complex.

Its subcellular location is the endoplasmic reticulum membrane. Functionally, subunit of the oligosaccharyl transferase (OST) complex that catalyzes the initial transfer of a defined glycan (Glc(3)Man(9)GlcNAc(2) in eukaryotes) from the lipid carrier dolichol-pyrophosphate to an asparagine residue within an Asn-X-Ser/Thr consensus motif in nascent polypeptide chains, the first step in protein N-glycosylation. N-glycosylation occurs cotranslationally and the complex associates with the Sec61 complex at the channel-forming translocon complex that mediates protein translocation across the endoplasmic reticulum (ER). All subunits are required for a maximal enzyme activity. In Arabidopsis thaliana (Mouse-ear cress), this protein is Dolichyl-diphosphooligosaccharide--protein glycosyltransferase subunit 4A (OST4A).